Reading from the N-terminus, the 171-residue chain is Dual specificity protein phosphatase OPG106 (171 aa).

In terms of domain architecture, Tyrosine-protein phosphatase spans Ser23–Asn171. Residue Cys110 is the Phosphocysteine intermediate of the active site.

It belongs to the protein-tyrosine phosphatase family. Non-receptor class dual specificity subfamily. Homodimer.

It is found in the virion. The protein localises to the host cytoplasm. It carries out the reaction O-phospho-L-tyrosyl-[protein] + H2O = L-tyrosyl-[protein] + phosphate. It catalyses the reaction O-phospho-L-seryl-[protein] + H2O = L-seryl-[protein] + phosphate. Inhibited by NSC-62914, NSC-28086, NSC-105687, NSC-23173, 540211 and 217691 with IC50 values of 48, 51, 212, 342, 4 and 11 uM, respectively. Its function is as follows. Serine/tyrosine phosphatase which down-regulates cellular antiviral response by dephosphorylating activated host STAT1 and blocking interferon (IFN)-stimulated innate immune responses. Dephosphorylates the OPG144 protein. The protein is Dual specificity protein phosphatase OPG106 (OPG106) of Homo sapiens (Human).